A 209-amino-acid polypeptide reads, in one-letter code: Probable L-serine dehydratase, alpha chain (209 aa).

It belongs to the iron-sulfur dependent L-serine dehydratase family. Heterodimer of an alpha chain and a beta chain. It depends on [4Fe-4S] cluster as a cofactor.

The enzyme catalyses L-serine = pyruvate + NH4(+). The protein operates within carbohydrate biosynthesis; gluconeogenesis. This Latilactobacillus sakei (Lactobacillus sakei) protein is Probable L-serine dehydratase, alpha chain (sdhA).